The sequence spans 317 residues: L-lactate dehydrogenase (317 aa).

Residues Val17, Asp38, Lys43, Tyr69, and 83 to 84 each bind NAD(+); that span reads GA. Substrate-binding residues include Gln86 and Arg92. NAD(+) is bound by residues Ser105, 122-124, and Ser147; that span reads ATN. 124-127 contacts substrate; sequence NPVD. Position 152–155 (152–155) interacts with substrate; it reads DTAR. Arg157 and His172 together coordinate beta-D-fructose 1,6-bisphosphate. The active-site Proton acceptor is His179. Position 224 is a phosphotyrosine (Tyr224). Residue Thr233 coordinates substrate.

This sequence belongs to the LDH/MDH superfamily. LDH family. As to quaternary structure, homotetramer.

The protein resides in the cytoplasm. The enzyme catalyses (S)-lactate + NAD(+) = pyruvate + NADH + H(+). Its pathway is fermentation; pyruvate fermentation to lactate; (S)-lactate from pyruvate: step 1/1. With respect to regulation, allosterically activated by fructose 1,6-bisphosphate (FBP). Functionally, catalyzes the conversion of lactate to pyruvate. The protein is L-lactate dehydrogenase of Bacillus caldotenax.